The chain runs to 209 residues: Large ribosomal subunit protein uL3 (209 aa).

The segment at 127-166 (NFGGGSRTHGQSDRLRAPGSVGGSSDPSRTFKGTRMAGRM) is disordered.

It belongs to the universal ribosomal protein uL3 family. Part of the 50S ribosomal subunit. Forms a cluster with proteins L14 and L19.

Its function is as follows. One of the primary rRNA binding proteins, it binds directly near the 3'-end of the 23S rRNA, where it nucleates assembly of the 50S subunit. This Chlorobaculum tepidum (strain ATCC 49652 / DSM 12025 / NBRC 103806 / TLS) (Chlorobium tepidum) protein is Large ribosomal subunit protein uL3.